The chain runs to 290 residues: Beta carbonic anhydrase 6, mitochondrial (290 aa).

Residues Met1–Gln20 constitute a mitochondrion transit peptide. Residue Ser122 is modified to Phosphoserine. An S-nitrosocysteine modification is found at Cys226.

It belongs to the beta-class carbonic anhydrase family. Strongly expressed in aerial tissues including leaves, stems, flowers and siliques, and, to a lower extent, in roots. Accumulates in guard cells.

The protein resides in the mitochondrion. The catalysed reaction is hydrogencarbonate + H(+) = CO2 + H2O. Reversible hydration of carbon dioxide. This is Beta carbonic anhydrase 6, mitochondrial (BCA6) from Arabidopsis thaliana (Mouse-ear cress).